The primary structure comprises 454 residues: tRNA modification GTPase MnmE (454 aa).

Residues arginine 23, glutamate 80, and lysine 120 each coordinate (6S)-5-formyl-5,6,7,8-tetrahydrofolate. In terms of domain architecture, TrmE-type G spans glycine 216–glycine 377. Residue asparagine 226 participates in K(+) binding. GTP contacts are provided by residues asparagine 226–serine 231, threonine 245–threonine 251, aspartate 270–glycine 273, asparagine 335–aspartate 338, and serine 358–arginine 360. Serine 230 is a Mg(2+) binding site. 3 residues coordinate K(+): threonine 245, isoleucine 247, and threonine 250. Residue threonine 251 coordinates Mg(2+). Residue lysine 454 coordinates (6S)-5-formyl-5,6,7,8-tetrahydrofolate.

The protein belongs to the TRAFAC class TrmE-Era-EngA-EngB-Septin-like GTPase superfamily. TrmE GTPase family. In terms of assembly, homodimer. Heterotetramer of two MnmE and two MnmG subunits. The cofactor is K(+).

Its subcellular location is the cytoplasm. Its function is as follows. Exhibits a very high intrinsic GTPase hydrolysis rate. Involved in the addition of a carboxymethylaminomethyl (cmnm) group at the wobble position (U34) of certain tRNAs, forming tRNA-cmnm(5)s(2)U34. The protein is tRNA modification GTPase MnmE of Enterobacter sp. (strain 638).